The chain runs to 279 residues: Oxygen-dependent coproporphyrinogen-III oxidase (279 aa).

Residue Ser102 participates in substrate binding. 2 residues coordinate a divalent metal cation: His106 and His116. His116 serves as the catalytic Proton donor. Residue 118 to 120 (NTR) coordinates substrate. A divalent metal cation contacts are provided by His149 and His179. Residues 244–279 (YVEFNLLYDRGTKFGLMTDGNVEAILMSLPPEVKWA) form an important for dimerization region.

This sequence belongs to the aerobic coproporphyrinogen-III oxidase family. Homodimer. A divalent metal cation is required as a cofactor.

The protein resides in the cytoplasm. The enzyme catalyses coproporphyrinogen III + O2 + 2 H(+) = protoporphyrinogen IX + 2 CO2 + 2 H2O. The protein operates within porphyrin-containing compound metabolism; protoporphyrin-IX biosynthesis; protoporphyrinogen-IX from coproporphyrinogen-III (O2 route): step 1/1. Involved in the heme biosynthesis. Catalyzes the aerobic oxidative decarboxylation of propionate groups of rings A and B of coproporphyrinogen-III to yield the vinyl groups in protoporphyrinogen-IX. The chain is Oxygen-dependent coproporphyrinogen-III oxidase from Rickettsia bellii (strain OSU 85-389).